We begin with the raw amino-acid sequence, 55 residues long: Protein CADMIUM TOLERANCE 1 (55 aa).

A helical membrane pass occupies residues 24–40; the sequence is GCLYACIFTALCCFCCY.

The protein belongs to the CYSTM1 family. Expressed in roots and shoots.

Its subcellular location is the cell membrane. The protein localises to the secreted. It localises to the cell wall. Confers resistance to heavy metal ions (e.g. cadmium (CdCl(2)) and copper (CuCl(2))) by chelating them at the plasma membrane of root cells, thus stopping their entry and reducing their accumulation. Binds to aluminium (Al). This is Protein CADMIUM TOLERANCE 1 from Oryza sativa subsp. japonica (Rice).